A 436-amino-acid polypeptide reads, in one-letter code: MKIIRGFAQAEKRLSRRDKAGFFLDETERTELARRLGVDPEKAVNGIIADVRKQGDEAVLGYTLKFDRANLSKLEVGQPEIQQAASEIPAELFEALQLAASQIRAYHRFQKEAVWKTAEIMQGKQLIRPLERVGLYVPGGKAFYPSTVLMTAIPAREAGVKEIILVTPPGANGKIPAPTLAAAQIAGVDRIFACGGAQAVAALAFGTKSIPKVDKICGPGNIFVTLAKKAVFGVVDIDGLQGPSEVLIVADQYANAEYCASDILAQAEHDALASSILITTSEDLANRVNDIVESKADTCSRRDIIKQSLRDNGLIAVVDNINEAIKLANMYAAEHLCLLVKDSEKYLTQINHAGCIFYGEKASVVMGDYVAGPSHALPTSGTARFSSPLNILDFVKYIDIVKVDKQDIAKLGQAAATIAKAEGLECHAEAVLKRLE.

Residues Tyr-136, Gln-198, and Asn-221 each coordinate NAD(+). Substrate-binding residues include Ser-244, Gln-266, and His-269. Residues Gln-266 and His-269 each contribute to the Zn(2+) site. Catalysis depends on proton acceptor residues Glu-334 and His-335. Substrate contacts are provided by His-335, Asp-368, Glu-422, and His-427. Asp-368 serves as a coordination point for Zn(2+). His-427 lines the Zn(2+) pocket.

The protein belongs to the histidinol dehydrogenase family. It depends on Zn(2+) as a cofactor.

The enzyme catalyses L-histidinol + 2 NAD(+) + H2O = L-histidine + 2 NADH + 3 H(+). The protein operates within amino-acid biosynthesis; L-histidine biosynthesis; L-histidine from 5-phospho-alpha-D-ribose 1-diphosphate: step 9/9. In terms of biological role, catalyzes the sequential NAD-dependent oxidations of L-histidinol to L-histidinaldehyde and then to L-histidine. This chain is Histidinol dehydrogenase, found in Dehalococcoides mccartyi (strain CBDB1).